The sequence spans 386 residues: MKVISLKKDSFNKGGAVITLLPEDKEDLFTVYQIVDKDDELIFKKKFTSKLDEAGKKKSTDLVKLKIKVISEDFDMKDEYLKYKGVTVTDESGASNVDIPVGKYLSFTLDYVYPFTIIKQNFNKFMQKLLNEACNIEYKSDTAAVVLQEGIAHVCLVTSSSTILKQKIEYSMPKKKRTTDVLKFDEKTEKFYKAIYSAMKKDLNFDKLKTIILCSPGFYAKILMDKIFQYAEEEHNKKILDNKGMFFIAHCSTGYLQGINEVLKNPLYASKLQDTKYSKEIMVMDEFLLHLNKDDDKAWYGEKEVVKAAEYGAISYLLLTDKVLHSDNIAQREEYLKLMDSVESNGGKALVLSTLHSLGEELDQLTGIACILKYPLPDLDEDDGEE.

It belongs to the eukaryotic release factor 1 family. Pelota subfamily. In terms of assembly, monomer. Component of the Dom34-Hbs1 complex, also named Pelota-HBS1L complex, composed of DOM34 and HBS1. The cofactor is a divalent metal cation.

It is found in the cytoplasm. Component of the Dom34-Hbs1 complex, a complex that recognizes stalled ribosomes and triggers the No-Go Decay (NGD) pathway. In the Dom34-Hbs1 complex, DOM34 recognizes ribosomes stalled at the 3' end of an mRNA and engages stalled ribosomes by destabilizing mRNA in the mRNA channel. Following ribosome-binding, the Dom34-Hbs1 complex promotes the disassembly of stalled ribosomes, followed by degradation of damaged mRNAs as part of the NGD pathway. The Dom34-Hbs1 complex is also involved in non-functional rRNA decay. This is Protein DOM34 from Saccharomyces cerevisiae (strain ATCC 204508 / S288c) (Baker's yeast).